Consider the following 326-residue polypeptide: Vacuolar protein sorting-associated protein 26A-B (326 aa).

Belongs to the VPS26 family. In terms of assembly, component of the heterotrimeric retromer cargo-selective complex (CSC) which is believed to associate with variable sorting nexins to form functionally distinct retromer complex variants.

The protein localises to the cytoplasm. It is found in the endosome membrane. The protein resides in the early endosome. Its function is as follows. Acts as a component of the retromer cargo-selective complex (CSC). The CSC is believed to be the core functional component of retromer or respective retromer complex variants acting to prevent missorting of selected transmembrane cargo proteins into the lysosomal degradation pathway. Retromer mediates retrograde transport of cargo proteins from endosomes to the trans-Golgi network (TGN). In Xenopus laevis (African clawed frog), this protein is Vacuolar protein sorting-associated protein 26A-B (vps26a-b).